Here is a 1208-residue protein sequence, read N- to C-terminus: Calmodulin-binding transcription activator 2 (1208 aa).

The CG-1 DNA-binding region spans 30-160 (RCPLLPPERL…YLNVPALEDC (131 aa)). The short motif at 78 to 86 (NRKKVKYRK) is the Nuclear localization signal element. Disordered regions lie at residues 269–328 (ISHS…SRGG), 366–418 (VGSE…PCPA), and 437–507 (QLGA…ELEP). A compositionally biased stretch (pro residues) spans 275 to 288 (PEPPPLIAPLPPEL). Composition is skewed to low complexity over residues 294–305 (SPSSSSSSSSSS) and 319–328 (TSRGGSSRGG). 2 stretches are compositionally biased toward pro residues: residues 371-380 (SAPPAPPSPA) and 464-476 (TVPP…PSSP). An IPT/TIG domain is found at 544–622 (DFSPEWSYPE…LSASVLFEYR (79 aa)). ANK repeat units lie at residues 717-750 (RGMS…SLDL), 762-792 (FSCT…ALSI), and 796-826 (LGRL…ELSV). Disordered stretches follow at residues 826 to 881 (VEHP…ASDI) and 908 to 936 (NSKE…DSPP). Residues 829-853 (PLALSPPSSSPDTGLSSASSPSELS) show a composition bias toward low complexity. IQ domains follow at residues 1054–1083 (LYEA…AAAV) and 1107–1136 (MTQA…AAVL). A disordered region spans residues 1144–1166 (YRRRPGPPHRPSGPLPARNKGTF).

This sequence belongs to the CAMTA family. May interact with calmodulin.

Its subcellular location is the nucleus. Transcription activator. May act as tumor suppressor. In Mus musculus (Mouse), this protein is Calmodulin-binding transcription activator 2 (Camta2).